The following is a 257-amino-acid chain: MAALQNPVALQSRTTTAVAALSTSSTTSTPKPFSLSFSSSTATFNPLRLKILTASKLTAKPRGGALGTRMVDSTASRYASALADVADVTGTLEATNSDVEKLIRIFSEEPVYYFFANPVISIDNKRSVLDEIITTSGLQPHTANFINILIDSERINLVKEILNEFEDVFNKITGTEVAVVTSVVKLENDHLAQIAKGVQKITGAKNVRIKTVIDPSLVAGFTIRYGNEGSKLVDMSVKKQLEEIAAQLEMDDVTLAV.

The transit peptide at 1-70 (MAALQNPVAL…PRGGALGTRM (70 aa)) directs the protein to the chloroplast.

Belongs to the ATPase delta chain family. In terms of assembly, F-type ATPases have 2 components, CF(1) - the catalytic core - and CF(0) - the membrane proton channel. CF(1) has five subunits: alpha(3), beta(3), gamma(1), delta(1), epsilon(1). CF(0) has three main subunits: a, b and c.

Its subcellular location is the plastid. It is found in the chloroplast thylakoid membrane. Its function is as follows. This protein seems to be part of the stalk that links CF(0) to CF(1). It either transmits conformational changes from CF(0) into CF(1) or is implicated in proton conduction. The chain is ATP synthase delta chain, chloroplastic (ATPD) from Spinacia oleracea (Spinach).